The primary structure comprises 92 residues: Small ribosomal subunit protein bS20 (92 aa).

This sequence belongs to the bacterial ribosomal protein bS20 family.

Its function is as follows. Binds directly to 16S ribosomal RNA. This Rickettsia conorii (strain ATCC VR-613 / Malish 7) protein is Small ribosomal subunit protein bS20.